The following is a 364-amino-acid chain: MQPKQRILNAPVYQPGKPIDDVKREFGLTEVIKLASNENPFGSSPKAKAAISEQLDNLALYPDGASLNLRWDLADFLGVKPSQLFFGNGSDEILLMISRAFLSEGTNAVMATQTFSQYRSNGIIEGADLIEVPLKDGVHDLEAMAAAINEQTKVVWVCNPNNPSGTIVTTSELEAFMKKTPKDVLVVLDEAYYEYVVDPEYPQTVPMLAEYPNLIILRTFSKIYGLAALRIGYGIASEELISSLEHVREPFNTGTLGQVAARAALKDQEFVKSCRDRNREGMKQFTDSFDEWGLSYYPSQTNFILVDLKMDSDEVFKKLLSQGIIVRSGNALGFPGFQRITIGTKEQNDKILSVLKEIVTGALK.

Lysine 222 carries the N6-(pyridoxal phosphate)lysine modification.

It belongs to the class-II pyridoxal-phosphate-dependent aminotransferase family. Histidinol-phosphate aminotransferase subfamily. In terms of assembly, homodimer. Pyridoxal 5'-phosphate serves as cofactor.

The catalysed reaction is L-histidinol phosphate + 2-oxoglutarate = 3-(imidazol-4-yl)-2-oxopropyl phosphate + L-glutamate. It functions in the pathway amino-acid biosynthesis; L-histidine biosynthesis; L-histidine from 5-phospho-alpha-D-ribose 1-diphosphate: step 7/9. This Brevibacillus brevis (strain 47 / JCM 6285 / NBRC 100599) protein is Histidinol-phosphate aminotransferase.